The sequence spans 340 residues: UDP-3-O-(3-hydroxymyristoyl)glucosamine N-acyltransferase (340 aa).

Histidine 239 functions as the Proton acceptor in the catalytic mechanism.

This sequence belongs to the transferase hexapeptide repeat family. LpxD subfamily. As to quaternary structure, homotrimer.

The enzyme catalyses a UDP-3-O-[(3R)-3-hydroxyacyl]-alpha-D-glucosamine + a (3R)-hydroxyacyl-[ACP] = a UDP-2-N,3-O-bis[(3R)-3-hydroxyacyl]-alpha-D-glucosamine + holo-[ACP] + H(+). It carries out the reaction UDP-3-O-[(3R)-3-hydroxytetradecanoyl]-alpha-D-glucosamine + (3R)-hydroxytetradecanoyl-[ACP] = UDP-2-N,3-O-bis[(3R)-3-hydroxytetradecanoyl]-alpha-D-glucosamine + holo-[ACP] + H(+). It participates in glycolipid biosynthesis; lipid IV(A) biosynthesis; lipid IV(A) from (3R)-3-hydroxytetradecanoyl-[acyl-carrier-protein] and UDP-N-acetyl-alpha-D-glucosamine: step 3/6. Its function is as follows. Catalyzes the N-acylation of UDP-3-O-(hydroxytetradecanoyl)glucosamine using 3-hydroxytetradecanoyl-ACP as the acyl donor. Is involved in the biosynthesis of lipid A, a phosphorylated glycolipid that anchors the lipopolysaccharide to the outer membrane of the cell. The polypeptide is UDP-3-O-(3-hydroxymyristoyl)glucosamine N-acyltransferase (Yersinia enterocolitica).